We begin with the raw amino-acid sequence, 501 residues long: Zinc finger C3HC-type protein 1 (501 aa).

Position 2 is an N-acetylalanine (A2). The disordered stretch occupies residues 21 to 73 (VVRSPEGTPQKVRELIDEGIVPEEGGTEPKDTAATFQSVDGSPQAEQSPLEST). S24 bears the Phosphoserine mark. The residue at position 28 (T28) is a Phosphothreonine. Positions 54 to 72 (ATFQSVDGSPQAEQSPLES) are enriched in polar residues. A phosphoserine mark is found at S58, S62, and S68. T84 carries the post-translational modification Phosphothreonine. Residues 102–156 (CAKYGWVTVECDMLKCSSCQAFLCASLQPTFDFGRYKERCAELKKSLCSAHEKFC) form a C3HC-type zinc finger. The interval 302–421 (SPIPGVEGRP…TSPRSFFDPT (120 aa)) is disordered. A phosphoserine mark is found at S320 and S328. Over residues 326-338 (TRSQDATVSPGSE) the composition is skewed to polar residues. The residue at position 332 (T332) is a Phosphothreonine. Phosphoserine is present on residues S334, S337, S343, S353, S358, S369, and S380. Polar residues-rich tracts occupy residues 350 to 359 (RTRSWESSSP) and 369 to 383 (SPTT…SMGT). T383 carries the post-translational modification Phosphothreonine. S394 is subject to Phosphoserine. The Nuclear localization signal signature appears at 395-401 (PLRRTKR). Phosphoserine occurs at positions 406 and 482. Residues 406 to 420 (SSSSSDTSPRSFFDP) are compositionally biased toward low complexity.

In terms of assembly, interacts with TPR; this interaction mediates ZC3HC1 nuclear envelopes (NE)-association but also required for proper positioning of a substantial amount of TPR at the nuclear basket (NB). Phosphorylated. May also be weakly phosphorylated on Tyr residues.

It localises to the nucleus. The protein localises to the nucleus envelope. Required for proper positioning of a substantial amount of TPR at the nuclear basket (NB) through interaction with TPR. This Mus musculus (Mouse) protein is Zinc finger C3HC-type protein 1 (Zc3hc1).